The chain runs to 319 residues: Ribosomal RNA small subunit methyltransferase H (319 aa).

S-adenosyl-L-methionine-binding positions include Gly-39–His-41, Asp-59, Phe-83, Asp-104, and Gln-111.

Belongs to the methyltransferase superfamily. RsmH family.

The protein resides in the cytoplasm. It carries out the reaction cytidine(1402) in 16S rRNA + S-adenosyl-L-methionine = N(4)-methylcytidine(1402) in 16S rRNA + S-adenosyl-L-homocysteine + H(+). Functionally, specifically methylates the N4 position of cytidine in position 1402 (C1402) of 16S rRNA. This is Ribosomal RNA small subunit methyltransferase H from Ralstonia pickettii (strain 12D).